A 546-amino-acid polypeptide reads, in one-letter code: Protein FAM124A (546 aa).

Disordered stretches follow at residues methionine 1–serine 37, lysine 285–lysine 361, and serine 488–isoleucine 546. Residues serine 24–leucine 36 show a composition bias toward low complexity. Residues lysine 285–serine 302 are compositionally biased toward basic residues. 2 stretches are compositionally biased toward polar residues: residues proline 304–asparagine 324 and alanine 347–lysine 361. Over residues serine 488 to proline 511 the composition is skewed to low complexity.

This sequence belongs to the FAM124 family.

This chain is Protein FAM124A (FAM124A), found in Pongo abelii (Sumatran orangutan).